The following is a 98-amino-acid chain: Large ribosomal subunit protein uL23 (98 aa).

It belongs to the universal ribosomal protein uL23 family. Part of the 50S ribosomal subunit. Contacts protein L29, and trigger factor when it is bound to the ribosome.

In terms of biological role, one of the early assembly proteins it binds 23S rRNA. One of the proteins that surrounds the polypeptide exit tunnel on the outside of the ribosome. Forms the main docking site for trigger factor binding to the ribosome. The chain is Large ribosomal subunit protein uL23 from Ruegeria pomeroyi (strain ATCC 700808 / DSM 15171 / DSS-3) (Silicibacter pomeroyi).